The following is a 1248-amino-acid chain: Period circadian protein homolog 2 (1248 aa).

The disordered stretch occupies residues Met1–Lys57. Polar residues-rich tracts occupy residues Pro9–Val24 and Ser32–Ser50. The short motif at Leu105–Val114 is the Nuclear export signal 1 element. In terms of domain architecture, PAS 1 spans Ile175–Leu242. The LXXLL motif lies at Leu302–Leu306. Positions Tyr315–Gln381 constitute a PAS 2 domain. Residues Tyr389 to Pro432 enclose the PAC domain. A Nuclear export signal 2 motif is present at residues Leu456–Met465. Disordered stretches follow at residues Pro467 to Lys563 and Val619 to His638. The segment at Ser474 to Ser478 is important for protein stability. Residues Arg506–Lys706 form a CSNK1E binding domain region. The span at Ile510–Ser521 shows a compositional bias: polar residues. Ser521, Ser524, Ser527, and Ser540 each carry phosphoserine. Residues Phe523–Ala534 show a composition bias toward basic and acidic residues. Ser656, Ser690, Ser694, Ser703, and Ser755 each carry phosphoserine. Disordered stretches follow at residues Asp675–Pro708 and Arg751–Pro829. The Nuclear localization signal signature appears at Lys773 to Arg789. Residues Lys774–Lys787 are compositionally biased toward basic residues. Positions Ser816 to Ser827 are enriched in low complexity. Residues Asp873–Leu1058 are interaction with PPARG. Ser930 is subject to Phosphoserine. Residues Thr950–Ser971 form a disordered region. Residue Thr955 is modified to Phosphothreonine. A Phosphoserine modification is found at Ser962. The Nuclear export signal 3 motif lies at Leu974 to Leu981. Positions Ala984 to Leu1035 are disordered. Residues Gly987–Gly1004 are compositionally biased toward low complexity. The LXXLL motif lies at Leu1042–Leu1046. Positions Ala1057–Ser1080 are enriched in low complexity. The segment at Ala1057–Asp1113 is disordered. Residues Gly1083–Ser1102 show a composition bias toward polar residues. The span at Glu1103–Thr1112 shows a compositional bias: basic and acidic residues. The residue at position 1117 (Ser1117) is a Phosphoserine. The tract at residues Ser1148–Thr1248 is CRY binding domain. Residues Pro1215–Thr1248 form a disordered region.

Homodimer. Component of the circadian core oscillator, which includes the CRY proteins, CLOCK or NPAS2, BMAL1 or BMAL2, CSNK1D and/or CSNK1E, TIMELESS, and the PER proteins. Interacts with CLOCK-BMAL1 (off DNA). Interacts with BMAL2. Interacts directly with PER1 and PER3, and through a C-terminal domain, with CRY1 and CRY2. Interacts (via PAS 2 domain) with TIMELESS. Interacts with NFIL3. Different large complexes have been identified with different repressive functions. The core of PER complexes is composed of at least PER1, PER2, PER3, CRY1, CRY2, CSNK1D and/or CSNK1E. The large PER complex involved in the repression of transcriptional termination is composed of at least PER2, CDK9, DDX5, DHX9, NCBP1 and POLR2A (active). The large PER complex involved in the histone deacetylation is composed of at least HDAC1, PER2, SFPQ and SIN3A. The large PER complex involved in the histone methylation is composed of at least PER2, CBX3, TRIM28, SUV39H1 and/or SUV39H2; CBX3 mediates the formation of the complex. Interacts with SETX; the interaction inhibits termination of circadian target genes. Interacts with the nuclear receptors HNF4A, NR1D1, NR4A2, RORA, PPARA, PPARG and THRA; the interaction with at least PPARG is ligand dependent. Interacts with PML. Interacts (phosphorylated) with BTRC and FBXW11; the interactions trigger proteasomal degradation. Interacts with NONO and SFPQ. Interacts with PRKCDBP. Interacts with MAGEL2. Interacts with MAP1LC3B. Interacts with HNF4A. Post-translationally, acetylated. Deacetylated by SIRT1, resulting in decreased protein stability. Deacetylated by SIRT6, preventing its degradation by the proteasome, resulting in increased protein stability. Phosphorylated by CSNK1E and CSNK1D. Phosphorylation results in PER2 protein degradation. May be dephosphorylated by PP1. In terms of processing, ubiquitinated, leading to its proteasomal degradation. Ubiquitination may be inhibited by CRY1. As to expression, expressed in the brain, mainly in the suprachiasmatic nucleus (SCN). Expression also found in the harderian gland, lung, eye, intestine, liver and skeletal muscle.

Its subcellular location is the nucleus. It localises to the cytoplasm. It is found in the perinuclear region. Its function is as follows. Transcriptional repressor which forms a core component of the circadian clock. The circadian clock, an internal time-keeping system, regulates various physiological processes through the generation of approximately 24 hour circadian rhythms in gene expression, which are translated into rhythms in metabolism and behavior. It is derived from the Latin roots 'circa' (about) and 'diem' (day) and acts as an important regulator of a wide array of physiological functions including metabolism, sleep, body temperature, blood pressure, endocrine, immune, cardiovascular, and renal function. Consists of two major components: the central clock, residing in the suprachiasmatic nucleus (SCN) of the brain, and the peripheral clocks that are present in nearly every tissue and organ system. Both the central and peripheral clocks can be reset by environmental cues, also known as Zeitgebers (German for 'timegivers'). The predominant Zeitgeber for the central clock is light, which is sensed by retina and signals directly to the SCN. The central clock entrains the peripheral clocks through neuronal and hormonal signals, body temperature and feeding-related cues, aligning all clocks with the external light/dark cycle. Circadian rhythms allow an organism to achieve temporal homeostasis with its environment at the molecular level by regulating gene expression to create a peak of protein expression once every 24 hours to control when a particular physiological process is most active with respect to the solar day. Transcription and translation of core clock components (CLOCK, NPAS2, BMAL1, BMAL2, PER1, PER2, PER3, CRY1 and CRY2) plays a critical role in rhythm generation, whereas delays imposed by post-translational modifications (PTMs) are important for determining the period (tau) of the rhythms (tau refers to the period of a rhythm and is the length, in time, of one complete cycle). A diurnal rhythm is synchronized with the day/night cycle, while the ultradian and infradian rhythms have a period shorter and longer than 24 hours, respectively. Disruptions in the circadian rhythms contribute to the pathology of cardiovascular diseases, cancer, metabolic syndrome and aging. A transcription/translation feedback loop (TTFL) forms the core of the molecular circadian clock mechanism. Transcription factors, CLOCK or NPAS2 and BMAL1 or BMAL2, form the positive limb of the feedback loop, act in the form of a heterodimer and activate the transcription of core clock genes and clock-controlled genes (involved in key metabolic processes), harboring E-box elements (5'-CACGTG-3') within their promoters. The core clock genes: PER1/2/3 and CRY1/2 which are transcriptional repressors form the negative limb of the feedback loop and interact with the CLOCK|NPAS2-BMAL1|BMAL2 heterodimer inhibiting its activity and thereby negatively regulating their own expression. This heterodimer also activates nuclear receptors NR1D1/2 and RORA/B/G, which form a second feedback loop and which activate and repress BMAL1 transcription, respectively. PER1 and PER2 proteins transport CRY1 and CRY2 into the nucleus with appropriate circadian timing, but also contribute directly to repression of clock-controlled target genes through interaction with several classes of RNA-binding proteins, helicases and others transcriptional repressors. PER appears to regulate circadian control of transcription by at least three different modes. First, interacts directly with the CLOCK-BMAL1 at the tail end of the nascent transcript peak to recruit complexes containing the SIN3-HDAC that remodel chromatin to repress transcription. Second, brings H3K9 methyltransferases such as SUV39H1 and SUV39H2 to the E-box elements of the circadian target genes, like PER2 itself or PER1. The recruitment of each repressive modifier to the DNA seems to be very precisely temporally orchestrated by the large PER complex, the deacetylases acting before than the methyltransferases. Additionally, large PER complexes are also recruited to the target genes 3' termination site through interactions with RNA-binding proteins and helicases that may play a role in transcription termination to regulate transcription independently of CLOCK-BMAL1 interactions. Recruitment of large PER complexes to the elongating polymerase at PER and CRY termination sites inhibited SETX action, impeding RNA polymerase II release and thereby repressing transcriptional reinitiation. May propagate clock information to metabolic pathways via the interaction with nuclear receptors. Coactivator of PPARA and corepressor of NR1D1, binds rhythmically at the promoter of nuclear receptors target genes like BMAL1 or G6PC1. Directly and specifically represses PPARG proadipogenic activity by blocking PPARG recruitment to target promoters and thereby transcriptional activation. Required for fatty acid and lipid metabolism, is involved as well in the regulation of circulating insulin levels. Plays an important role in the maintenance of cardiovascular functions through the regulation of NO and vasodilatatory prostaglandins production in aortas. Controls circadian glutamate uptake in synaptic vesicles through the regulation of VGLUT1 expression. May also be involved in the regulation of inflammatory processes. Represses the CLOCK-BMAL1 induced transcription of BHLHE40/DEC1 and ATF4. Negatively regulates the formation of the TIMELESS-CRY1 complex by competing with TIMELESS for binding to CRY1. This chain is Period circadian protein homolog 2 (PER2), found in Spalax judaei (Judean Mountains blind mole rat).